We begin with the raw amino-acid sequence, 526 residues long: MSDFYQDFNKRRTFAIISHPDAGKTTVTEKLLLFGGAIQLAGTVKGRKADRHATSDWMEMEKERGISITTSVMQFVHNQHVINLLDTPGHEDFSEDTYRTLTAVDSALMVIDVAKGVEERTVKLMEVCRLRDTPIMTFINKLDREGREPIDLLDEVESVLGIQCAPITWPVGMGKRFKGIYHRYQDIIYLYQQGSNAKKIDATQIKGLDNPQLDELIGDSAKELREEIELVRGASNEFNLQDYLAGKMTPVYFGSAINNFGIKELLDDFVEYAPGPQPRATQERVVSPNEETFSGFVFKIQANMDPKHRDRIAFVRVCSGSYKKGMKLSHLRIGKEVQISNALTFMAGDRSHTELALAGDIIGLHNHGTIRIGDTFTQGEQLKFTGIPNFAPELFRLVRLRDPLKSKALLKGLIELSEEGATQVFRPLNSNQLILGAVGILQFDVVAHRLKYEYKVDCIYESVNIACARWVYSDDDKAMSEFRTKAYDYLALDGGDMLMYLAPTKVNLTMAEERYPKIKFCATREH.

A tr-type G domain is found at 9 to 277 (NKRRTFAIIS…DFVEYAPGPQ (269 aa)). Residues 18-25 (SHPDAGKT), 86-90 (DTPGH), and 140-143 (NKLD) contribute to the GTP site.

It belongs to the TRAFAC class translation factor GTPase superfamily. Classic translation factor GTPase family. PrfC subfamily.

The protein resides in the cytoplasm. Its function is as follows. Increases the formation of ribosomal termination complexes and stimulates activities of RF-1 and RF-2. It binds guanine nucleotides and has strong preference for UGA stop codons. It may interact directly with the ribosome. The stimulation of RF-1 and RF-2 is significantly reduced by GTP and GDP, but not by GMP. This chain is Peptide chain release factor 3, found in Legionella pneumophila (strain Lens).